Consider the following 351-residue polypeptide: Beta-1,4-xylosyltransferase IRX9 (351 aa).

At 1–16 the chain is on the cytoplasmic side; that stretch reads MGSLERSKKKAQVWKK. The helical; Signal-anchor for type II membrane protein transmembrane segment at 17–36 threads the bilayer; that stretch reads AVIHFSLCFVMGFFTGFAPA. The Lumenal portion of the chain corresponds to 37–351; that stretch reads GKASFFSNFE…KFPTRTRLST (315 aa). N-linked (GlcNAc...) asparagine glycosylation is found at Asn64 and Asn74. A disordered region spans residues 80-107; sequence SQSQAPAPAESREAEGETRSLSEKEDEN. Basic and acidic residues predominate over residues 89 to 107; it reads ESREAEGETRSLSEKEDEN. N-linked (GlcNAc...) asparagine glycosylation is found at Asn271 and Asn287.

Belongs to the glycosyltransferase 43 family. Expressed in developing interfascicular fibers, primary and secondary xylem in stems and developing secondary xylem in roots.

It localises to the golgi apparatus membrane. The enzyme catalyses [(1-&gt;4)-beta-D-xylan](n) + UDP-alpha-D-xylose = [(1-&gt;4)-beta-D-xylan](n+1) + UDP + H(+). Involved in the synthesis of the hemicellulose glucuronoxylan, a major component of secondary cell walls. Xylan xylosyltransferase that acts cooperatively with IRX14 to achieve the successive addition of xylosyl residues during xylan backbone elongation. This is Beta-1,4-xylosyltransferase IRX9 from Arabidopsis thaliana (Mouse-ear cress).